A 183-amino-acid polypeptide reads, in one-letter code: NAD(P)H-quinone oxidoreductase subunit I, chloroplastic (183 aa).

2 4Fe-4S ferredoxin-type domains span residues 55–84 (GRIHFEFDKCIACEVCVRVCPINLPVVDWK) and 95–124 (KSYSIDFGVCIFCGNCVEYCPTNCLSMTEE). [4Fe-4S] cluster is bound by residues cysteine 64, cysteine 67, cysteine 70, cysteine 74, cysteine 104, cysteine 107, cysteine 110, and cysteine 114.

This sequence belongs to the complex I 23 kDa subunit family. As to quaternary structure, NDH is composed of at least 16 different subunits, 5 of which are encoded in the nucleus. The cofactor is [4Fe-4S] cluster.

It is found in the plastid. It localises to the chloroplast thylakoid membrane. It carries out the reaction a plastoquinone + NADH + (n+1) H(+)(in) = a plastoquinol + NAD(+) + n H(+)(out). The enzyme catalyses a plastoquinone + NADPH + (n+1) H(+)(in) = a plastoquinol + NADP(+) + n H(+)(out). Its function is as follows. NDH shuttles electrons from NAD(P)H:plastoquinone, via FMN and iron-sulfur (Fe-S) centers, to quinones in the photosynthetic chain and possibly in a chloroplast respiratory chain. The immediate electron acceptor for the enzyme in this species is believed to be plastoquinone. Couples the redox reaction to proton translocation, and thus conserves the redox energy in a proton gradient. This chain is NAD(P)H-quinone oxidoreductase subunit I, chloroplastic, found in Anthoceros angustus (Hornwort).